The sequence spans 419 residues: Divinyl chlorophyllide a 8-vinyl-reductase, chloroplastic (419 aa).

A chloroplast-targeting transit peptide spans M1–V71.

Its subcellular location is the plastid. The protein localises to the chloroplast. It catalyses the reaction protochlorophyllide a + NADP(+) = 3,8-divinyl protochlorophyllide a + NADPH + H(+). The protein operates within porphyrin-containing compound metabolism; chlorophyll biosynthesis. In terms of biological role, catalyzes the conversion of divinyl chlorophyllide to monovinyl chlorophyllide. Reduces the 8-vinyl group of the tetrapyrrole to an ethyl group using NADPH as the reductant. The best substrate is (3,8-divinyl)-chlorophyllide a (DV-Chlidea). Very low activity with (3,8-divinyl)-protochlorophyllide a (DV-Pchlidea) and (3,8-divinyl)-magnesium-protoporphyrin IX monomethyl ester (DV-MPE). No activity with (3,8-divinyl)-magnesium-protoporphyrin IX (DV-Mg-Proto) and (3,8-divinyl)-chlorophyll a (DV-Chla). This is Divinyl chlorophyllide a 8-vinyl-reductase, chloroplastic (DVR) from Cucumis sativus (Cucumber).